The following is a 310-amino-acid chain: Glutamyl-Q tRNA(Asp) synthetase (310 aa).

Residues 8-12 and Glu-44 each bind L-glutamate; that span reads RFAPS. Positions 11 to 21 match the 'HIGH' region motif; that stretch reads PSPTGPLHLGS. Zn(2+) contacts are provided by Cys-100, Cys-102, Tyr-123, and Cys-127. Tyr-183 and Arg-201 together coordinate L-glutamate. The short motif at 239-243 is the 'KMSKS' region element; that stretch reads KLSKQ. Lys-242 provides a ligand contact to ATP.

The protein belongs to the class-I aminoacyl-tRNA synthetase family. GluQ subfamily. Zn(2+) is required as a cofactor.

Its function is as follows. Catalyzes the tRNA-independent activation of glutamate in presence of ATP and the subsequent transfer of glutamate onto a tRNA(Asp). Glutamate is transferred on the 2-amino-5-(4,5-dihydroxy-2-cyclopenten-1-yl) moiety of the queuosine in the wobble position of the QUC anticodon. The protein is Glutamyl-Q tRNA(Asp) synthetase of Cupriavidus metallidurans (strain ATCC 43123 / DSM 2839 / NBRC 102507 / CH34) (Ralstonia metallidurans).